Consider the following 392-residue polypeptide: MIISASTDYRHAAKRRLPPFLFHYADGGAYAEHTLRRNVEDLAGIALRQRVLKDMSHLSLETELFGEPLAMPVALAPVGLAGMYARRGEVQAARAAASKGIPFTLSTVSVCPIAEVASAIERPLWFQLYVLRDRGFMKHVLERAKAAGVKTLVFTVDMPVPGARYRDAHSGMSGKHGGLRRMLQAVTHPSWAWDVGLHGRPHDLGNVSDYRGQPTELEDYIAWLGNNFDPSISWKDLEWIREFWDGPMIIKGILDPEDARDAVRFGADGIVVSNHGGRQLDGVPSTARALPAIADAVKGDLAILADSGVRNGLDVVRMIAMGADTILLGRAYIYALATAGEAGVAHLLELFEKEMRVAMTLTGARSIAELGSDSLVTGSAAASIERTLSPSL.

An FMN hydroxy acid dehydrogenase domain is found at methionine 1–alanine 380. Tyrosine 24 is a substrate binding site. Serine 106 and glutamine 127 together coordinate FMN. Tyrosine 129 contacts substrate. FMN is bound at residue threonine 155. A substrate-binding site is contributed by arginine 164. Lysine 251 contacts FMN. Histidine 275 functions as the Proton acceptor in the catalytic mechanism. Arginine 278 lines the substrate pocket. Aspartate 306–arginine 330 lines the FMN pocket.

Belongs to the FMN-dependent alpha-hydroxy acid dehydrogenase family. The cofactor is FMN.

It localises to the cell inner membrane. It catalyses the reaction (S)-lactate + A = pyruvate + AH2. Catalyzes the conversion of L-lactate to pyruvate. Is coupled to the respiratory chain. In Chromohalobacter salexigens (strain ATCC BAA-138 / DSM 3043 / CIP 106854 / NCIMB 13768 / 1H11), this protein is L-lactate dehydrogenase.